A 268-amino-acid polypeptide reads, in one-letter code: Probable intron-encoded DNA endonuclease 1 (268 aa).

This sequence belongs to the LAGLIDADG endonuclease family.

It localises to the mitochondrion. Functionally, mitochondrial DNA endonuclease involved in intron homing. The polypeptide is Probable intron-encoded DNA endonuclease 1 (hegI1) (Mycosarcoma maydis (Corn smut fungus)).